A 366-amino-acid chain; its full sequence is Histidinol-phosphate aminotransferase (366 aa).

Lys-228 bears the N6-(pyridoxal phosphate)lysine mark.

This sequence belongs to the class-II pyridoxal-phosphate-dependent aminotransferase family. Histidinol-phosphate aminotransferase subfamily. Homodimer. Pyridoxal 5'-phosphate is required as a cofactor.

It carries out the reaction L-histidinol phosphate + 2-oxoglutarate = 3-(imidazol-4-yl)-2-oxopropyl phosphate + L-glutamate. It functions in the pathway amino-acid biosynthesis; L-histidine biosynthesis; L-histidine from 5-phospho-alpha-D-ribose 1-diphosphate: step 7/9. The polypeptide is Histidinol-phosphate aminotransferase (Stutzerimonas stutzeri (Pseudomonas stutzeri)).